The sequence spans 289 residues: Geranylgeranyl diphosphate synthase (289 aa).

2 residues coordinate isopentenyl diphosphate: R43 and H73. Residues D80 and D86 each coordinate Mg(2+). R91 serves as a coordination point for (2E,6E)-farnesyl diphosphate. R92 is a binding site for isopentenyl diphosphate. K170, T171, and Q205 together coordinate (2E,6E)-farnesyl diphosphate.

Belongs to the FPP/GGPP synthase family. It depends on Mg(2+) as a cofactor.

It carries out the reaction isopentenyl diphosphate + (2E,6E)-farnesyl diphosphate = (2E,6E,10E)-geranylgeranyl diphosphate + diphosphate. The protein operates within isoprenoid biosynthesis; geranylgeranyl diphosphate biosynthesis; geranylgeranyl diphosphate from farnesyl diphosphate and isopentenyl diphosphate: step 1/1. Catalyzes the condensation of farnesyl diphosphate (FPP) and isopentenyl diphosphate (IPP) to yield geranylgeranyl diphosphate (GGPP) needed for biosynthesis of carotenoids and diterpenes. The chain is Geranylgeranyl diphosphate synthase (crtE) from Rhodobacter capsulatus (strain ATCC BAA-309 / NBRC 16581 / SB1003).